The chain runs to 173 residues: Small ribosomal subunit protein uS5 (173 aa).

An S5 DRBM domain is found at 18-81 (LREKMIAVNR…EQARRGMFKV (64 aa)).

This sequence belongs to the universal ribosomal protein uS5 family. As to quaternary structure, part of the 30S ribosomal subunit. Contacts proteins S4 and S8.

Functionally, with S4 and S12 plays an important role in translational accuracy. Its function is as follows. Located at the back of the 30S subunit body where it stabilizes the conformation of the head with respect to the body. This is Small ribosomal subunit protein uS5 from Bordetella petrii (strain ATCC BAA-461 / DSM 12804 / CCUG 43448).